The following is a 322-amino-acid chain: Putative small RNA degrading nuclease 4 (322 aa).

The Exonuclease domain maps to 75–213; the sequence is MLALDCEMVL…HDAAAAMKLA (139 aa).

Belongs to the REXO1/REXO3 family.

It localises to the nucleus. Its function is as follows. Putative 3'-5' exonuclease degrading single-stranded small RNAs. The protein is Putative small RNA degrading nuclease 4 (SDN4) of Arabidopsis thaliana (Mouse-ear cress).